Reading from the N-terminus, the 1393-residue chain is DNA-directed RNA polymerase subunit beta' (1393 aa).

Zn(2+) is bound by residues Cys-72, Cys-74, Cys-87, and Cys-90. The Mg(2+) site is built by Asp-463, Asp-465, and Asp-467. Residues Cys-812, Cys-887, Cys-894, and Cys-897 each coordinate Zn(2+).

Belongs to the RNA polymerase beta' chain family. As to quaternary structure, the RNAP catalytic core consists of 2 alpha, 1 beta, 1 beta' and 1 omega subunit. When a sigma factor is associated with the core the holoenzyme is formed, which can initiate transcription. It depends on Mg(2+) as a cofactor. The cofactor is Zn(2+).

The enzyme catalyses RNA(n) + a ribonucleoside 5'-triphosphate = RNA(n+1) + diphosphate. In terms of biological role, DNA-dependent RNA polymerase catalyzes the transcription of DNA into RNA using the four ribonucleoside triphosphates as substrates. The polypeptide is DNA-directed RNA polymerase subunit beta' (Chlamydia felis (strain Fe/C-56) (Chlamydophila felis)).